A 353-amino-acid polypeptide reads, in one-letter code: 4-hydroxy-2-oxovalerate aldolase 1 (353 aa).

The Pyruvate carboxyltransferase domain occupies 14–266 (VRMTDTSLRD…KTGIDFFDIA (253 aa)). Residue 22-23 (RD) participates in substrate binding. D23 serves as a coordination point for Mn(2+). H26 serves as the catalytic Proton acceptor. S176 and H205 together coordinate substrate. Positions 205 and 207 each coordinate Mn(2+). Y296 contacts substrate.

The protein belongs to the 4-hydroxy-2-oxovalerate aldolase family.

It carries out the reaction (S)-4-hydroxy-2-oxopentanoate = acetaldehyde + pyruvate. The polypeptide is 4-hydroxy-2-oxovalerate aldolase 1 (Mycobacterium sp. (strain KMS)).